The following is an 873-amino-acid chain: Chitin synthase F (873 aa).

The disordered stretch occupies residues 1–105 (MEDAHDQSSR…KSGSGLRRYP (105 aa)). 3 stretches are compositionally biased toward polar residues: residues 33–46 (SYPSNENEDVSQSL), 58–72 (ISSQWPPGTIQQNPS), and 80–98 (ESEVASQTSWQRRQTTKSG). An N-linked (GlcNAc...) asparagine glycan is attached at Asn-506. 7 helical membrane-spanning segments follow: residues 532–554 (LVFLHVQLVYNICQLTMTWFSLA), 588–608 (IVNNIIKALYLAFLMQQFFLA), 621–641 (ILTFLYFAIVQLYILILSFYL), 672–692 (GLVLIALVSTYGTYIIASILY), 702–722 (SWAYFLGMPLTINVLNVYAFC), 802–822 (LVLLWTLCNGLLALLINNDSV), and 841–861 (VILWATSGLSVFRFLGALWFL).

This sequence belongs to the chitin synthase family. Class III subfamily.

It is found in the cell membrane. It carries out the reaction [(1-&gt;4)-N-acetyl-beta-D-glucosaminyl](n) + UDP-N-acetyl-alpha-D-glucosamine = [(1-&gt;4)-N-acetyl-beta-D-glucosaminyl](n+1) + UDP + H(+). In terms of biological role, polymerizes chitin, a structural polymer of the cell wall and septum, by transferring the sugar moiety of UDP-GlcNAc to the non-reducing end of the growing chitin polymer. Plays an important role in septal growth or maintenance. Mediates colony spore formation. This chain is Chitin synthase F, found in Aspergillus niger (strain ATCC MYA-4892 / CBS 513.88 / FGSC A1513).